The primary structure comprises 153 residues: Putative OPA3-like protein CG43998 (153 aa).

A coiled-coil region spans residues 101–153 (ELSKTYTKTKKQNQEIEDQKRVLDECVDCISADVERNQREINWIKAALKNVEK).

It belongs to the OPA3 family.

The protein is Putative OPA3-like protein CG43998 of Drosophila melanogaster (Fruit fly).